The primary structure comprises 426 residues: 3-phosphoshikimate 1-carboxyvinyltransferase (426 aa).

Positions 20, 21, and 25 each coordinate 3-phosphoshikimate. Phosphoenolpyruvate is bound at residue Lys-20. Phosphoenolpyruvate-binding residues include Gly-92 and Arg-120. 4 residues coordinate 3-phosphoshikimate: Ser-165, Gln-167, Asp-313, and Lys-340. Gln-167 is a phosphoenolpyruvate binding site. Asp-313 acts as the Proton acceptor in catalysis. Phosphoenolpyruvate contacts are provided by Arg-344 and Arg-386.

Belongs to the EPSP synthase family. Monomer.

It is found in the cytoplasm. It catalyses the reaction 3-phosphoshikimate + phosphoenolpyruvate = 5-O-(1-carboxyvinyl)-3-phosphoshikimate + phosphate. It functions in the pathway metabolic intermediate biosynthesis; chorismate biosynthesis; chorismate from D-erythrose 4-phosphate and phosphoenolpyruvate: step 6/7. Functionally, catalyzes the transfer of the enolpyruvyl moiety of phosphoenolpyruvate (PEP) to the 5-hydroxyl of shikimate-3-phosphate (S3P) to produce enolpyruvyl shikimate-3-phosphate and inorganic phosphate. The sequence is that of 3-phosphoshikimate 1-carboxyvinyltransferase from Brevibacillus brevis (strain 47 / JCM 6285 / NBRC 100599).